A 193-amino-acid chain; its full sequence is MNLIPTVIEQTNRGERAYDIYSRLLKDRIIMLGSAIDDNVANSIVSQLLFLESQDPEKDIHIYINSPGGSITAGMAIYDTMQFIKPQVSTICIGMAASMGAFLLAAGEKGKRYALPNSEVMIHQPLGGAQGQATEIEIAAKRILFLREKLNQILADRTGQPLEVLQRDTDRDNFMTAEKALEYGLIDKIFTNR.

S98 functions as the Nucleophile in the catalytic mechanism. The active site involves H123.

The protein belongs to the peptidase S14 family. In terms of assembly, fourteen ClpP subunits assemble into 2 heptameric rings which stack back to back to give a disk-like structure with a central cavity, resembling the structure of eukaryotic proteasomes.

It localises to the cytoplasm. The catalysed reaction is Hydrolysis of proteins to small peptides in the presence of ATP and magnesium. alpha-casein is the usual test substrate. In the absence of ATP, only oligopeptides shorter than five residues are hydrolyzed (such as succinyl-Leu-Tyr-|-NHMec, and Leu-Tyr-Leu-|-Tyr-Trp, in which cleavage of the -Tyr-|-Leu- and -Tyr-|-Trp bonds also occurs).. Functionally, cleaves peptides in various proteins in a process that requires ATP hydrolysis. Has a chymotrypsin-like activity. Plays a major role in the degradation of misfolded proteins. This Bacillus cereus (strain ATCC 14579 / DSM 31 / CCUG 7414 / JCM 2152 / NBRC 15305 / NCIMB 9373 / NCTC 2599 / NRRL B-3711) protein is ATP-dependent Clp protease proteolytic subunit 2.